Reading from the N-terminus, the 57-residue chain is uncharacterized protein (57 aa).

The next 2 helical transmembrane spans lie at 4–26 and 33–55; these read VNIL…SELW and ALGY…IAIL.

The protein localises to the cell membrane. This is an uncharacterized protein from Methanocaldococcus jannaschii (strain ATCC 43067 / DSM 2661 / JAL-1 / JCM 10045 / NBRC 100440) (Methanococcus jannaschii).